The primary structure comprises 148 residues: Lysozyme C-2 (148 aa).

Residues 1-18 (MKTLLTLGLLLLSVTAQA) form the signal peptide. Positions 19 to 148 (KVYERCEFAR…LSQYIRNCGV (130 aa)) constitute a C-type lysozyme domain. Intrachain disulfides connect cysteine 24/cysteine 146, cysteine 48/cysteine 134, cysteine 83/cysteine 99, and cysteine 95/cysteine 113. Active-site residues include glutamate 53 and aspartate 71.

This sequence belongs to the glycosyl hydrolase 22 family. In terms of assembly, monomer. As to expression, expressed weakly in myeloblasts, moderately in immature macrophages, and strongly in both mature macrophages and macrophage-rich tissues.

The protein resides in the secreted. The catalysed reaction is Hydrolysis of (1-&gt;4)-beta-linkages between N-acetylmuramic acid and N-acetyl-D-glucosamine residues in a peptidoglycan and between N-acetyl-D-glucosamine residues in chitodextrins.. Its function is as follows. Lysozymes have primarily a bacteriolytic function; those in tissues and body fluids are associated with the monocyte-macrophage system and enhance the activity of immunoagents. Lyz2 is active against a range of Gram-positive and Gram-negative bacteria. More effective than Lyz1 in killing Gram-negative bacteria. Lyz1 and Lyz2 are equally effective in killing Gram-positive bacteria. In Mus musculus (Mouse), this protein is Lysozyme C-2 (Lyz2).